We begin with the raw amino-acid sequence, 30 residues long: Varv peptide G (30 aa).

The segment at residues 1-30 is a cross-link (cyclopeptide (Gly-Asn)); sequence GVPVCGETCFGGTCNTPGCSCDPWPVCSRN. Intrachain disulfides connect Cys-5–Cys-19, Cys-9–Cys-21, and Cys-14–Cys-27.

Post-translationally, this is a cyclic peptide.

Probably participates in a plant defense mechanism. This is Varv peptide G from Viola arvensis (European field pansy).